The following is a 522-amino-acid chain: Nitrogen fixation protein VnfA (522 aa).

The segment at 22-183 is a domain; it reads LLYEMSQIAT…AQAVELYLVE (162 aa). Positions 35-177 constitute a GAF domain; the sequence is DLSSIISILL…ILATTTAQAV (143 aa). Residues 210–439 enclose the Sigma-54 factor interaction domain; it reads IIGNSKPMLE…LENVIERAML (230 aa). ATP is bound by residues 238-245 and 301-310; these read GESGVGKE and AAGGTIFLDE. The H-T-H motif DNA-binding region spans 493–512; sequence MTEAATHLGLTARVLGLRMG.

In terms of biological role, required for the expression of the V-dependent nitrogen fixation system in Azotobacter vinelandii. It is required for the regulation of nitrogenase 2 transcription. Interacts with sigma-54. The chain is Nitrogen fixation protein VnfA (vnfA) from Azotobacter vinelandii.